Consider the following 395-residue polypeptide: RNA pseudouridine synthase 7 (395 aa).

The interval 1–21 (MKRKQQEDDNDDGVEKAVSPV) is disordered. The region spanning 74-136 (KTIVDLFADE…HEPPVMIDDV (63 aa)) is the S4 RNA-binding domain. Asp-187 is an active-site residue. Polar residues predominate over residues 244-255 (EGRSTAEDANSS). A disordered region spans residues 244–263 (EGRSTAEDANSSGDDKKVKG).

It belongs to the pseudouridine synthase RluA family.

The enzyme catalyses a uridine in RNA = a pseudouridine in RNA. The sequence is that of RNA pseudouridine synthase 7 from Arabidopsis thaliana (Mouse-ear cress).